The sequence spans 199 residues: UPF0637 protein YsbB (199 aa).

The protein belongs to the UPF0637 family.

The sequence is that of UPF0637 protein YsbB (ysbB) from Lactococcus lactis subsp. lactis (strain IL1403) (Streptococcus lactis).